We begin with the raw amino-acid sequence, 232 residues long: Phosphatidylserine decarboxylase proenzyme (232 aa).

The active-site Schiff-base intermediate with substrate; via pyruvic acid is the serine 190. Serine 190 carries the post-translational modification Pyruvic acid (Ser); by autocatalysis.

This sequence belongs to the phosphatidylserine decarboxylase family. PSD-A subfamily. As to quaternary structure, heterodimer of a large membrane-associated beta subunit and a small pyruvoyl-containing alpha subunit. Pyruvate is required as a cofactor. Post-translationally, is synthesized initially as an inactive proenzyme. Formation of the active enzyme involves a self-maturation process in which the active site pyruvoyl group is generated from an internal serine residue via an autocatalytic post-translational modification. Two non-identical subunits are generated from the proenzyme in this reaction, and the pyruvate is formed at the N-terminus of the alpha chain, which is derived from the carboxyl end of the proenzyme. The post-translation cleavage follows an unusual pathway, termed non-hydrolytic serinolysis, in which the side chain hydroxyl group of the serine supplies its oxygen atom to form the C-terminus of the beta chain, while the remainder of the serine residue undergoes an oxidative deamination to produce ammonia and the pyruvoyl prosthetic group on the alpha chain.

Its subcellular location is the cell membrane. It carries out the reaction a 1,2-diacyl-sn-glycero-3-phospho-L-serine + H(+) = a 1,2-diacyl-sn-glycero-3-phosphoethanolamine + CO2. Its pathway is phospholipid metabolism; phosphatidylethanolamine biosynthesis; phosphatidylethanolamine from CDP-diacylglycerol: step 2/2. Catalyzes the formation of phosphatidylethanolamine (PtdEtn) from phosphatidylserine (PtdSer). In Brucella anthropi (strain ATCC 49188 / DSM 6882 / CCUG 24695 / JCM 21032 / LMG 3331 / NBRC 15819 / NCTC 12168 / Alc 37) (Ochrobactrum anthropi), this protein is Phosphatidylserine decarboxylase proenzyme.